Reading from the N-terminus, the 197-residue chain is Double homeobox protein 5 (197 aa).

2 DNA-binding regions (homeobox) span residues 46–105 (GRRM…LRQH) and 121–180 (GRRK…RGQS). A disordered region spans residues 101 to 127 (QLRQHRRQSRPWPGRRDPQKGRRKRTA).

It belongs to the paired homeobox family. In terms of tissue distribution, expressed in hepatoma Hep3B cells.

Its subcellular location is the nucleus. The polypeptide is Double homeobox protein 5 (DUX5) (Homo sapiens (Human)).